Reading from the N-terminus, the 241-residue chain is Linker for activation of T-cells family member 1 (241 aa).

The Extracellular segment spans residues 1–4 (MEAD). Residues 5–28 (ALSPVELGLLLLPFVVMLLAALCV) form a helical; Signal-anchor for type III membrane protein membrane-spanning segment. S-palmitoyl cysteine attachment occurs at residues C27 and C30. Over 29–241 (RCRELPASYD…PDYENLQELN (213 aa)) the chain is Cytoplasmic. Phosphoserine occurs at positions 41, 44, 87, 104, 109, and 112. Positions 78 to 139 (QPDLLPIPRS…DDYPEGYLVV (62 aa)) are disordered. Residues 97–115 (MPSSRQNSDDANSVASYEN) are compositionally biased toward polar residues. Positions 124–133 (DEDEDEDDYP) are enriched in acidic residues. An interaction with PLCG1 region spans residues 136-139 (YLVV). Position 175 is a phosphotyrosine (Y175). Interaction with GRB2, GRAP2 and PIK3R1 stretches follow at residues 175–178 (YVNV) and 195–198 (YVNV). Phosphoserine is present on residues S199, S212, and S215. The interval 209–241 (ELASVTSQEVEDEEEEDVDGEEAPDYENLQELN) is disordered. The segment covering 217–233 (EVEDEEEEDVDGEEAPD) has biased composition (acidic residues). Residue Y234 is modified to Phosphotyrosine.

When phosphorylated, interacts directly with the PIK3R1 subunit of phosphoinositide 3-kinase and the SH2 domains of GRB2, GRAP, GRAP2, PLCG1 and PLCG2. Interacts indirectly with CBL, SOS, VAV, and LCP2. Interacts with SHB, SKAP2 and CLNK. Interacts with FCGR1A. Interacts with GRB2, PLCG1 and THEMIS upon TCR activation in thymocytes. Interacts with THEMIS2. Post-translationally, phosphorylated on tyrosines by ZAP70 upon TCR activation, or by SYK upon other immunoreceptor activation; which leads to the recruitment of multiple signaling molecules. Is one of the most prominently tyrosine-phosphorylated proteins detected following TCR engagement. May be dephosphorylated by PTPRJ. Palmitoylation of Cys-27 and Cys-30 is required for raft targeting and efficient phosphorylation. In terms of processing, phosphorylated on tyrosines by ZAP70 upon TCR activation, or by SYK upon other immunoreceptor activation; which leads to the recruitment of multiple signaling molecules. Is one of the most prominently tyrosine-phosphorylated proteins detected following TCR engagement. May be dephosphorylated by PTPRJ. Phosphorylated by ITK leading to the recruitment of VAV1 to LAT-containing complexes. Post-translationally, 'Lys-63'-linked ubiquitinated by TRAF6. As to expression, expressed in NK cells. Present in lymph node, spleen and thymus (at protein level).

It localises to the cell membrane. Required for TCR (T-cell antigen receptor)- and pre-TCR-mediated signaling, both in mature T-cells and during their development. Involved in FCGR3 (low affinity immunoglobulin gamma Fc region receptor III)-mediated signaling in natural killer cells and FCER1 (high affinity immunoglobulin epsilon receptor)-mediated signaling in mast cells. Couples activation of these receptors and their associated kinases with distal intracellular events such as mobilization of intracellular calcium stores, PKC activation, MAPK activation or cytoskeletal reorganization through the recruitment of PLCG1, GRB2, GRAP2, and other signaling molecules. The polypeptide is Linker for activation of T-cells family member 1 (Lat) (Rattus norvegicus (Rat)).